Reading from the N-terminus, the 134-residue chain is Small ribosomal subunit protein uS11 (134 aa).

This sequence belongs to the universal ribosomal protein uS11 family. Part of the 30S ribosomal subunit. Interacts with proteins S7 and S18. Binds to IF-3.

In terms of biological role, located on the platform of the 30S subunit, it bridges several disparate RNA helices of the 16S rRNA. Forms part of the Shine-Dalgarno cleft in the 70S ribosome. The chain is Small ribosomal subunit protein uS11 from Leptothrix cholodnii (strain ATCC 51168 / LMG 8142 / SP-6) (Leptothrix discophora (strain SP-6)).